A 244-amino-acid chain; its full sequence is Gas vesicle protein F (244 aa).

This sequence belongs to the gas vesicle GvpF/GvpL family. In terms of assembly, binds GvpA.

Its subcellular location is the gas vesicle. Its function is as follows. A minor component of the gas vesicle, may be involved in preventing GvpA aggregation during gas vesicle nucleation. Gas vesicles (GV) are hollow, gas filled proteinaceous nanostructures. During planktonic growth they allow positioning of the organism at a favorable depth for light or nutrient acquisition. Functionally, cluster expression in E.coli (gvpA1-gvpA2-gvpC-gvpN-gvpJ-gvpK-gvpF-gvpG-gvpV-gvpW) allows cells to float and produces irregularly shaped gas vesicles. This is Gas vesicle protein F from Nostoc sp. (strain PCC 7120 / SAG 25.82 / UTEX 2576).